The following is a 262-amino-acid chain: MKTTQYVARQPDDNGFIHYPETEHQVWNTLITRQLKVIEGRACQEYLDGIEQLGLPHERIPQLDEINRVLQATTGWRVARVPALIPFQTFFELLASQQFPVATFIRTPEELDYLQEPDIFHEIFGHCPLLTNPWFAEFTHTYGKLGLKASKEERVFLARLYWMTIEFGLVETDQGKRIYGGGILSSPKETVYSLSDEPLHQAFNPLEAMRTPYRIDILQPLYFVLPDLKRLFQLAQEDIMALVHEAMRLGLHAPLFPPKQAA.

Fe cation is bound by residues histidine 121, histidine 126, and glutamate 166.

The protein belongs to the biopterin-dependent aromatic amino acid hydroxylase family. In terms of assembly, monomer. The cofactor is Fe(2+).

The catalysed reaction is (6R)-L-erythro-5,6,7,8-tetrahydrobiopterin + L-phenylalanine + O2 = (4aS,6R)-4a-hydroxy-L-erythro-5,6,7,8-tetrahydrobiopterin + L-tyrosine. It participates in amino-acid degradation; L-phenylalanine degradation; acetoacetate and fumarate from L-phenylalanine: step 1/6. The sequence is that of Phenylalanine-4-hydroxylase (phhA) from Pseudomonas aeruginosa (strain ATCC 15692 / DSM 22644 / CIP 104116 / JCM 14847 / LMG 12228 / 1C / PRS 101 / PAO1).